The sequence spans 346 residues: Phosphate acyltransferase (346 aa).

Belongs to the PlsX family. In terms of assembly, homodimer. Probably interacts with PlsY.

It is found in the cytoplasm. The catalysed reaction is a fatty acyl-[ACP] + phosphate = an acyl phosphate + holo-[ACP]. The protein operates within lipid metabolism; phospholipid metabolism. Functionally, catalyzes the reversible formation of acyl-phosphate (acyl-PO(4)) from acyl-[acyl-carrier-protein] (acyl-ACP). This enzyme utilizes acyl-ACP as fatty acyl donor, but not acyl-CoA. This Brucella suis biovar 1 (strain 1330) protein is Phosphate acyltransferase.